The following is a 303-amino-acid chain: Protease HtpX homolog (303 aa).

A run of 2 helical transmembrane segments spans residues 4 to 24 and 38 to 58; these read VVLFLLTNLAVIAVLSITARI and MGMLLAFAALIGFGGAFISLL. His144 contacts Zn(2+). The active site involves Glu145. A Zn(2+)-binding site is contributed by His148. The next 2 helical transmembrane spans lie at 152-172 and 199-219; these read GDMVTLTLIQGVVNTFVIFLS and ISSIAFEIVFGVLASIVVMYF. Zn(2+) is bound at residue Glu224.

This sequence belongs to the peptidase M48B family. Zn(2+) is required as a cofactor.

It localises to the cell inner membrane. The polypeptide is Protease HtpX homolog (Chlorobium phaeobacteroides (strain BS1)).